We begin with the raw amino-acid sequence, 357 residues long: uncharacterized protein (357 aa).

The 170-residue stretch at 27–196 folds into the PNPLA domain; it reads LVCEGGGQRG…SDAIPVKEAA (170 aa). The GXGXXG signature appears at 31–36; the sequence is GGGQRG. The short motif at 59–63 is the GXSXG element; that stretch reads GTSAG. Serine 61 functions as the Nucleophile in the catalytic mechanism. Catalysis depends on aspartate 183, which acts as the Proton acceptor. Positions 183-185 match the DGA/G motif; sequence DGG.

In terms of biological role, probable lipid hydrolase. This is an uncharacterized protein from Escherichia coli (strain K12).